Consider the following 318-residue polypeptide: Mitochondrial thiamine pyrophosphate carrier (318 aa).

Solcar repeat units lie at residues Asn-13–Leu-106, His-116–Ala-202, and Thr-214–Leu-309. A run of 5 helical transmembrane segments spans residues Ala-19–Ile-39, Ile-87–Leu-107, Phe-122–Leu-142, Val-173–Phe-193, and Leu-220–Ile-240. The Substrate recognition motif lies at Lys-241 to Val-246. The helical transmembrane segment at Ala-293–Ile-313 threads the bilayer.

Belongs to the mitochondrial carrier (TC 2.A.29) family.

The protein resides in the mitochondrion membrane. The catalysed reaction is thiamine phosphate(out) + thiamine diphosphate(in) = thiamine phosphate(in) + thiamine diphosphate(out). Mitochondrial transporter mediating uptake of thiamine diphosphate into mitochondria. It is not clear if the antiporter activity is affected by the membrane potential or by the proton electrochemical gradient. The sequence is that of Mitochondrial thiamine pyrophosphate carrier (Slc25a19) from Mus musculus (Mouse).